A 78-amino-acid polypeptide reads, in one-letter code: NAD(P)H-quinone oxidoreductase subunit O (78 aa).

Belongs to the complex I NdhO subunit family. As to quaternary structure, NDH-1 can be composed of about 15 different subunits; different subcomplexes with different compositions have been identified which probably have different functions.

Its subcellular location is the cell inner membrane. It carries out the reaction a plastoquinone + NADH + (n+1) H(+)(in) = a plastoquinol + NAD(+) + n H(+)(out). The enzyme catalyses a plastoquinone + NADPH + (n+1) H(+)(in) = a plastoquinol + NADP(+) + n H(+)(out). In terms of biological role, NDH-1 shuttles electrons from an unknown electron donor, via FMN and iron-sulfur (Fe-S) centers, to quinones in the respiratory and/or the photosynthetic chain. The immediate electron acceptor for the enzyme in this species is believed to be plastoquinone. Couples the redox reaction to proton translocation, and thus conserves the redox energy in a proton gradient. Cyanobacterial NDH-1 also plays a role in inorganic carbon-concentration. This is NAD(P)H-quinone oxidoreductase subunit O from Gloeobacter violaceus (strain ATCC 29082 / PCC 7421).